The sequence spans 109 residues: Nucleoid-associated protein Swoo_1794 (109 aa).

Positions Q88 to F109 are disordered.

This sequence belongs to the YbaB/EbfC family. Homodimer.

It is found in the cytoplasm. The protein resides in the nucleoid. Functionally, binds to DNA and alters its conformation. May be involved in regulation of gene expression, nucleoid organization and DNA protection. In Shewanella woodyi (strain ATCC 51908 / MS32), this protein is Nucleoid-associated protein Swoo_1794.